A 353-amino-acid chain; its full sequence is Photosystem II protein D1 (353 aa).

Thr-2 is subject to N-acetylthreonine. The residue at position 2 (Thr-2) is a Phosphothreonine. 3 consecutive transmembrane segments (helical) span residues 29-46 (YIGWFGVLMIPTLLTATS), 118-133 (HFLLGVACYMGREWEL), and 142-156 (WIAVAYSAPVAAAAA). His-118 contacts chlorophyll a. Pheophytin a is bound at residue Tyr-126. Residues Asp-170 and Glu-189 each contribute to the [CaMn4O5] cluster site. The chain crosses the membrane as a helical span at residues 197 to 218 (FHMLGVAGVFGGSLFSAMHGSL). His-198 contacts chlorophyll a. Residues His-215 and 264-265 (SF) contribute to the a quinone site. Fe cation is bound at residue His-215. His-272 is a binding site for Fe cation. The chain crosses the membrane as a helical span at residues 274 to 288 (FLAAWPVVGIWFTAL). Residues His-332, Glu-333, Asp-342, and Ala-344 each coordinate [CaMn4O5] cluster. Residues 345–353 (AVEAPSTNG) constitute a propeptide that is removed on maturation.

This sequence belongs to the reaction center PufL/M/PsbA/D family. PSII is composed of 1 copy each of membrane proteins PsbA, PsbB, PsbC, PsbD, PsbE, PsbF, PsbH, PsbI, PsbJ, PsbK, PsbL, PsbM, PsbT, PsbX, PsbY, PsbZ, Psb30/Ycf12, at least 3 peripheral proteins of the oxygen-evolving complex and a large number of cofactors. It forms dimeric complexes. The D1/D2 heterodimer binds P680, chlorophylls that are the primary electron donor of PSII, and subsequent electron acceptors. It shares a non-heme iron and each subunit binds pheophytin, quinone, additional chlorophylls, carotenoids and lipids. D1 provides most of the ligands for the Mn4-Ca-O5 cluster of the oxygen-evolving complex (OEC). There is also a Cl(-1) ion associated with D1 and D2, which is required for oxygen evolution. The PSII complex binds additional chlorophylls, carotenoids and specific lipids. serves as cofactor. Post-translationally, tyr-161 forms a radical intermediate that is referred to as redox-active TyrZ, YZ or Y-Z. C-terminally processed by CTPA; processing is essential to allow assembly of the oxygen-evolving complex and thus photosynthetic growth.

The protein localises to the plastid. It localises to the chloroplast thylakoid membrane. It carries out the reaction 2 a plastoquinone + 4 hnu + 2 H2O = 2 a plastoquinol + O2. Photosystem II (PSII) is a light-driven water:plastoquinone oxidoreductase that uses light energy to abstract electrons from H(2)O, generating O(2) and a proton gradient subsequently used for ATP formation. It consists of a core antenna complex that captures photons, and an electron transfer chain that converts photonic excitation into a charge separation. The D1/D2 (PsbA/PsbD) reaction center heterodimer binds P680, the primary electron donor of PSII as well as several subsequent electron acceptors. The protein is Photosystem II protein D1 of Panax ginseng (Korean ginseng).